Reading from the N-terminus, the 477-residue chain is UTP--glucose-1-phosphate uridylyltransferase (477 aa).

A2 carries the N-acetylalanine modification. Residues 92–95 (LNGG), K106, Q169, and G198 contribute to the UTP site. 94–95 (GG) is a substrate binding site. Substrate-binding positions include H199 and 227 to 229 (NSD). Residues D229 and K367 each contribute to the UTP site.

The protein belongs to the UDPGP type 1 family. As to quaternary structure, monomer. The cofactor is Mg(2+).

The protein localises to the cytoplasm. The enzyme catalyses alpha-D-glucose 1-phosphate + UTP + H(+) = UDP-alpha-D-glucose + diphosphate. With respect to regulation, inhibition by uncomplexed, free UTP. In terms of biological role, plays a central role as a glucosyl donor in cellular metabolic pathways. This Solanum tuberosum (Potato) protein is UTP--glucose-1-phosphate uridylyltransferase.